The sequence spans 228 residues: Geranylgeranylglyceryl phosphate synthase (228 aa).

Residue lysine 14 participates in sn-glycerol 1-phosphate binding. The Mg(2+) site is built by aspartate 16 and threonine 42. Sn-glycerol 1-phosphate is bound by residues 160–165 (YIEYSG), glycine 190, and 210–211 (GN).

The protein belongs to the GGGP/HepGP synthase family. Group I subfamily. The cofactor is Mg(2+).

It localises to the cytoplasm. The catalysed reaction is sn-glycerol 1-phosphate + (2E,6E,10E)-geranylgeranyl diphosphate = sn-3-O-(geranylgeranyl)glycerol 1-phosphate + diphosphate. Its pathway is membrane lipid metabolism; glycerophospholipid metabolism. Prenyltransferase that catalyzes the transfer of the geranylgeranyl moiety of geranylgeranyl diphosphate (GGPP) to the C3 hydroxyl of sn-glycerol-1-phosphate (G1P). This reaction is the first ether-bond-formation step in the biosynthesis of archaeal membrane lipids. The sequence is that of Geranylgeranylglyceryl phosphate synthase from Methanocella arvoryzae (strain DSM 22066 / NBRC 105507 / MRE50).